We begin with the raw amino-acid sequence, 469 residues long: Glutamate--tRNA ligase (469 aa).

The 'HIGH' region motif lies at 11–21; sequence PSPTGFIHLGN. Residues 243-247 carry the 'KMSKS' region motif; the sequence is KMSKR. K246 contributes to the ATP binding site.

This sequence belongs to the class-I aminoacyl-tRNA synthetase family. Glutamate--tRNA ligase type 1 subfamily. Monomer.

It localises to the cytoplasm. The enzyme catalyses tRNA(Glu) + L-glutamate + ATP = L-glutamyl-tRNA(Glu) + AMP + diphosphate. Functionally, catalyzes the attachment of glutamate to tRNA(Glu) in a two-step reaction: glutamate is first activated by ATP to form Glu-AMP and then transferred to the acceptor end of tRNA(Glu). This chain is Glutamate--tRNA ligase, found in Burkholderia lata (strain ATCC 17760 / DSM 23089 / LMG 22485 / NCIMB 9086 / R18194 / 383).